We begin with the raw amino-acid sequence, 282 residues long: 4-diphosphocytidyl-2-C-methyl-D-erythritol kinase (282 aa).

Lys9 is a catalytic residue. 98–108 serves as a coordination point for ATP; the sequence is PMGGGLGGGSS. Residue Asp140 is part of the active site.

Belongs to the GHMP kinase family. IspE subfamily. As to quaternary structure, homodimer.

It catalyses the reaction 4-CDP-2-C-methyl-D-erythritol + ATP = 4-CDP-2-C-methyl-D-erythritol 2-phosphate + ADP + H(+). It participates in isoprenoid biosynthesis; isopentenyl diphosphate biosynthesis via DXP pathway; isopentenyl diphosphate from 1-deoxy-D-xylulose 5-phosphate: step 3/6. Catalyzes the phosphorylation of the position 2 hydroxy group of 4-diphosphocytidyl-2C-methyl-D-erythritol. The sequence is that of 4-diphosphocytidyl-2-C-methyl-D-erythritol kinase from Klebsiella pneumoniae (strain 342).